Consider the following 216-residue polypeptide: Ras-related protein Rab-5C (216 aa).

GTP is bound by residues S30, A31, G33, K34, S35, S36, H47, E48, T53, and G79. S35 lines the Mg(2+) pocket. 2 short sequence motifs (switch) span residues 45-57 (QFHEYQESTIGAA) and 78-94 (AGQERYHSLAPMYYRGA). T53 serves as a coordination point for Mg(2+). A Phosphoserine modification is found at S85. GTP is bound by residues N134, K135, D137, A165, and K166. Residues 185 to 216 (NEPQNAAGAPSRNRGVDLQENSPASRSQCCSN) are disordered. Polar residues predominate over residues 203 to 216 (QENSPASRSQCCSN). Residues C213 and C214 are each lipidated (S-geranylgeranyl cysteine).

The protein belongs to the small GTPase superfamily. Rab family. As to quaternary structure, interacts with EEA1 and INCA1. Interacts with GDI1, GDI2, CHML and CHM; phosphorylation at Ser-85 disrupts this interaction. Requires Mg(2+) as cofactor. Post-translationally, phosphorylation of Ser-85 in the switch II region by LRRK2 prevents the association of RAB regulatory proteins, including CHM, CHML and RAB GDP dissociation inhibitors GDI1 and GDI2.

Its subcellular location is the cell membrane. The protein resides in the early endosome membrane. It localises to the melanosome. It catalyses the reaction GTP + H2O = GDP + phosphate + H(+). Its activity is regulated as follows. Regulated by guanine nucleotide exchange factors (GEFs) which promote the exchange of bound GDP for free GTP. Regulated by GTPase activating proteins (GAPs) which increase the GTP hydrolysis activity. Inhibited by GDP dissociation inhibitors (GDIs). The small GTPases Rab are key regulators of intracellular membrane trafficking, from the formation of transport vesicles to their fusion with membranes. Rabs cycle between an inactive GDP-bound form and an active GTP-bound form that is able to recruit to membranes different sets of downstream effectors directly responsible for vesicle formation, movement, tethering and fusion. This Canis lupus familiaris (Dog) protein is Ras-related protein Rab-5C (RAB5C).